We begin with the raw amino-acid sequence, 248 residues long: 3-deoxy-manno-octulosonate cytidylyltransferase (248 aa).

It belongs to the KdsB family.

It is found in the cytoplasm. The enzyme catalyses 3-deoxy-alpha-D-manno-oct-2-ulosonate + CTP = CMP-3-deoxy-beta-D-manno-octulosonate + diphosphate. The protein operates within nucleotide-sugar biosynthesis; CMP-3-deoxy-D-manno-octulosonate biosynthesis; CMP-3-deoxy-D-manno-octulosonate from 3-deoxy-D-manno-octulosonate and CTP: step 1/1. It participates in bacterial outer membrane biogenesis; lipopolysaccharide biosynthesis. Its function is as follows. Activates KDO (a required 8-carbon sugar) for incorporation into bacterial lipopolysaccharide in Gram-negative bacteria. This is 3-deoxy-manno-octulosonate cytidylyltransferase from Escherichia fergusonii (strain ATCC 35469 / DSM 13698 / CCUG 18766 / IAM 14443 / JCM 21226 / LMG 7866 / NBRC 102419 / NCTC 12128 / CDC 0568-73).